The following is a 589-amino-acid chain: Deoxynucleoside triphosphate triphosphohydrolase SAMHD1 (589 aa).

Met-1 carries the N-acetylmethionine modification. The segment covering 1-10 (MQSADSQNTP) has biased composition (polar residues). A disordered region spans residues 1 to 41 (MQSADSQNTPKRPRRDGSPRTPPDSPLADAETSPSHDLDPD). Ser-18 is subject to Phosphoserine. Thr-21 bears the Phosphothreonine mark. A phosphoserine mark is found at Ser-33 and Ser-88. In terms of domain architecture, SAM spans 45–100 (WGPEQVWSFLRRCGFSDSELLKRCREKRMSGSLLPFPEDLGISSHGKKMKLLNCIQ). GTP is bound by residues Lys-104 and Val-105. Asn-107 lines the dGTP pocket. Residues Asp-125, Gln-130, and Arg-133 each coordinate GTP. Residues Gln-137, Leu-138, Val-144, and Arg-152 each coordinate dGTP. Residue Gln-137 coordinates dATP. Position 137 (Gln-137) interacts with dCTP. Gln-137 is a binding site for dTTP. DATP is bound at residue Arg-152. Arg-152 contributes to the dCTP binding site. Residue Arg-152 participates in dTTP binding. The HD domain occupies 152–277 (RFEHSLGVGY…IKDASKWLYK (126 aa)). Residues His-155, His-194, and Asp-195 each coordinate Mn(2+). The dATP site is built by His-198 and His-203. The dCTP site is built by His-198 and His-203. Positions 198 and 203 each coordinate dTTP. The active site involves His-221. A Mn(2+)-binding site is contributed by Asp-300. The dGTP site is built by Lys-301, Tyr-304, Asp-308, Arg-322, Arg-341, Lys-343, Asn-347, Arg-355, Tyr-363, Gln-364, His-365, and Lys-366. DATP contacts are provided by Lys-301, Tyr-304, and Asp-308. The dCTP site is built by Lys-301, Tyr-304, and Asp-308. Lys-301, Tyr-304, and Asp-308 together coordinate dTTP. Arg-355 is a dATP binding site. Residue Arg-355 coordinates dCTP. Residue Gln-364 coordinates dATP. DCTP is bound at residue Gln-364. Position 364 (Gln-364) interacts with dTTP. Positions 440 and 444 each coordinate GTP. Lys-457 participates in a covalent cross-link: Glycyl lysine isopeptide (Lys-Gly) (interchain with G-Cter in SUMO2). Lys-512 is a binding site for GTP. Lys-512 is a binding site for dGTP.

Belongs to the SAMHD1 family. In terms of assembly, homodimer; in absence of GTP and dNTP. Homotetramer; in GTP- and dNTP-bound form. Interacts with MRE11; leading to stimulate the exonuclease activity of MRE11. Interacts with RBBP8/CtIP. Interacts (via its C-terminus) with CD81. It depends on Zn(2+) as a cofactor.

The protein localises to the nucleus. Its subcellular location is the chromosome. The catalysed reaction is a 2'-deoxyribonucleoside 5'-triphosphate + H2O = a 2'-deoxyribonucleoside + triphosphate + H(+). It catalyses the reaction dATP + H2O = 2'-deoxyadenosine + triphosphate + H(+). It carries out the reaction dCTP + H2O = 2'-deoxycytidine + triphosphate + H(+). The enzyme catalyses dGTP + H2O = 2'-deoxyguanosine + triphosphate + H(+). The catalysed reaction is dTTP + H2O = thymidine + triphosphate + H(+). With respect to regulation, allosterically activated and regulated via the combined actions of GTP and dNTPs (dATP, dGTP, dTTP and dCTP): Allosteric site 1 binds GTP, while allosteric site 2 binds dNTP. Allosteric activation promotes the formation of highly active homotetramers. In terms of biological role, protein that acts both as a host restriction factor involved in defense response to virus and as a regulator of DNA end resection at stalled replication forks. Has deoxynucleoside triphosphate (dNTPase) activity, which is required to restrict infection by viruses: dNTPase activity reduces cellular dNTP levels to levels too low for retroviral reverse transcription to occur, blocking early-stage virus replication in dendritic and other myeloid cells. Likewise, suppresses LINE-1 retrotransposon activity. In addition to virus restriction, dNTPase activity acts as a regulator of DNA precursor pools by regulating dNTP pools. Functions during S phase at stalled DNA replication forks to promote the resection of gapped or reversed forks: acts by stimulating the exonuclease activity of MRE11, activating the ATR-CHK1 pathway and allowing the forks to restart replication. Its ability to promote degradation of nascent DNA at stalled replication forks is required to prevent induction of type I interferons, thereby preventing chronic inflammation. Ability to promote DNA end resection at stalled replication forks is independent of dNTPase activity. Enhances immunoglobulin hypermutation in B-lymphocytes by promoting transversion mutation. In Bos taurus (Bovine), this protein is Deoxynucleoside triphosphate triphosphohydrolase SAMHD1.